We begin with the raw amino-acid sequence, 600 residues long: Integrator complex subunit 11 (600 aa).

6 residues coordinate Zn(2+): histidine 68, histidine 70, aspartate 72, histidine 73, histidine 157, and aspartate 178. The HXHXDH motif motif lies at 68–73; sequence HFHLDH. Glutamate 203 is an active-site residue. A Glycyl lysine isopeptide (Lys-Gly) (interchain with G-Cter in SUMO) cross-link involves residue lysine 381. Residue histidine 414 participates in Zn(2+) binding. Glycyl lysine isopeptide (Lys-Gly) (interchain with G-Cter in SUMO) cross-links involve residues lysine 462 and lysine 475. The Nuclear localization signal signature appears at 469-479; it reads LLPEAKKPRLL.

Belongs to the metallo-beta-lactamase superfamily. RNA-metabolizing metallo-beta-lactamase-like family. INTS11 subfamily. Component of the Integrator complex, composed of core subunits INTS1, INTS2, INTS3, INTS4, INTS5, INTS6, INTS7, INTS8, INTS9/RC74, INTS10, INTS11/CPSF3L, INTS12, INTS13, INTS14 and INTS15. The core complex associates with protein phosphatase 2A subunits PPP2CA and PPP2R1A, to form the Integrator-PP2A (INTAC) complex. INTS11 is part of the RNA endonuclease subcomplex, composed of INTS4, INTS9, INTS11 and inositol hexakisphosphate (InsP6). Interacts with WDR73; interaction is required for the assembly of the RNA endonuclease subcomplex in the cytoplasm. Interacts with BRAT1; interaction is required for the assembly of the RNA endonuclease subcomplex and inhibits the endonuclease activity of INTS11 before formation of mature integrator complex. Requires Zn(2+) as cofactor. Sumoylated; sumoylation regulates its subcellular location and is required for integrator complex integrity.

The protein resides in the nucleus. It localises to the cytoplasm. The RNA endonuclease activity is inhibited by BRAT1 that forms hyrogen bond and hydrophobic interactions with the active site. RNA endonuclease component of the integrator complex, a multiprotein complex that terminates RNA polymerase II (Pol II) transcription in the promoter-proximal region of genes. The integrator complex provides a quality checkpoint during transcription elongation by driving premature transcription termination of transcripts that are unfavorably configured for transcriptional elongation: the complex terminates transcription by (1) catalyzing dephosphorylation of the C-terminal domain (CTD) of Pol II subunit POLR2A/RPB1 and SUPT5H/SPT5, (2) degrading the exiting nascent RNA transcript via endonuclease activity and (3) promoting the release of Pol II from bound DNA. The integrator complex is also involved in terminating the synthesis of non-coding Pol II transcripts, such as enhancer RNAs (eRNAs), small nuclear RNAs (snRNAs), telomerase RNAs and long non-coding RNAs (lncRNAs). Within the integrator complex, INTS11 constitutes the RNA endonuclease subunit that degrades exiting nascent RNA transcripts. Mediates recruitment of cytoplasmic dynein to the nuclear envelope, probably as component of the integrator complex. In Mus musculus (Mouse), this protein is Integrator complex subunit 11.